The sequence spans 182 residues: Large ribosomal subunit protein uL5 (182 aa).

It belongs to the universal ribosomal protein uL5 family. Part of the 50S ribosomal subunit; part of the 5S rRNA/L5/L18/L25 subcomplex. Contacts the 5S rRNA and the P site tRNA. Forms a bridge to the 30S subunit in the 70S ribosome.

Functionally, this is one of the proteins that bind and probably mediate the attachment of the 5S RNA into the large ribosomal subunit, where it forms part of the central protuberance. In the 70S ribosome it contacts protein S13 of the 30S subunit (bridge B1b), connecting the 2 subunits; this bridge is implicated in subunit movement. Contacts the P site tRNA; the 5S rRNA and some of its associated proteins might help stabilize positioning of ribosome-bound tRNAs. This Leptospira interrogans serogroup Icterohaemorrhagiae serovar copenhageni (strain Fiocruz L1-130) protein is Large ribosomal subunit protein uL5.